A 357-amino-acid chain; its full sequence is Sorbitol dehydrogenase (357 aa).

At A2 the chain carries N-acetylalanine. A Zn(2+)-binding site is contributed by C45. Y51 is a binding site for substrate. Zn(2+) is bound by residues H70 and E71. E156 is a substrate binding site. I184, D204, and R209 together coordinate NAD(+). 2 positions are modified to phosphoserine: S211 and S225. Residues 273–275 (VGL) and 297–299 (VFR) contribute to the NAD(+) site. Substrate is bound by residues R299 and Y300.

Belongs to the zinc-containing alcohol dehydrogenase family. In terms of assembly, homotetramer. It depends on Zn(2+) as a cofactor. In terms of tissue distribution, expressed in liver. Expressed in kidney and epithelial cells of both benign and malignant prostate tissue. Expressed in epididymis (at protein level).

It is found in the mitochondrion membrane. The protein resides in the cell projection. Its subcellular location is the cilium. It localises to the flagellum. The enzyme catalyses keto-D-fructose + NADH + H(+) = D-sorbitol + NAD(+). The catalysed reaction is L-threitol + NAD(+) = L-erythrulose + NADH + H(+). It carries out the reaction xylitol + NAD(+) = D-xylulose + NADH + H(+). It catalyses the reaction ribitol + NAD(+) = D-ribulose + NADH + H(+). The enzyme catalyses (R,R)-butane-2,3-diol + NAD(+) = (R)-acetoin + NADH + H(+). The catalysed reaction is L-iditol + NAD(+) = keto-L-sorbose + NADH + H(+). Its activity is regulated as follows. Inhibited by CP-166,572, an inhibitor that is competitive with fructose. Also competitively inhibited by phenanthroline and 4-methylpyrazole in vitro. Functionally, polyol dehydrogenase that catalyzes the reversible NAD(+)-dependent oxidation of various sugar alcohols. Is mostly active with D-sorbitol (D-glucitol), L-threitol, xylitol and ribitol as substrates, leading to the C2-oxidized products D-fructose, L-erythrulose, D-xylulose, and D-ribulose, respectively. Is a key enzyme in the polyol pathway that interconverts glucose and fructose via sorbitol, which constitutes an important alternate route for glucose metabolism. The polyol pathway is believed to be involved in the etiology of diabetic complications, such as diabetic neuropathy and retinopathy, induced by hyperglycemia. May play a role in sperm motility by using sorbitol as an alternative energy source for sperm motility. May have a more general function in the metabolism of secondary alcohols since it also catalyzes the stereospecific oxidation of (2R,3R)-2,3-butanediol. To a lesser extent, can also oxidize L-arabinitol, galactitol and D-mannitol and glycerol in vitro. Oxidizes neither ethanol nor other primary alcohols. Cannot use NADP(+) as the electron acceptor. This chain is Sorbitol dehydrogenase (SORD), found in Homo sapiens (Human).